Consider the following 446-residue polypeptide: MSRRRKKLPQESITCEIESLSHEGRGVSHKDGKTLFVEGALPGETVTARYVNSRRSYDELAVEEVLTQHPQRIEPDCQFSKLCGGCSMQHVDLGFQINHKESVLLDHLRHFGDLKPEQVVPPLVGAGRGYRTKARLGVRYVAKRDEVLVGFRERYSNFLTAIDECPILIESVGGRIPELKALVRSLSGYQRIPQIEVAAGDDMCALVIRHMDPLTEEDLQKLIAFSEQTGLAIYLQPKGPDTVAKLWPKDGQELLSYQLRDYGLTMQFHPMDFTQVNRDINRRMLAQALEWLQPQAGETILDLFCGLGNFTLPIARSAAHVVGVEGSEDMVRRGYANAELNGISNVEFHAADLHLPLAPAKEAKHAWLRTYDKVLLDPPRSGAEELAKQMTRFGAKRIVYVSCNPATLARDAGILATQGYKLIKAGVMDMFPHTAHVESMALFEKA.

The TRAM domain maps to 6 to 64 (KKLPQESITCEIESLSHEGRGVSHKDGKTLFVEGALPGETVTARYVNSRRSYDELAVEE). The [4Fe-4S] cluster site is built by Cys-77, Cys-83, Cys-86, and Cys-165. S-adenosyl-L-methionine is bound by residues Gln-275, Phe-304, Asn-309, Glu-325, Asp-352, and Asp-377. Cys-403 acts as the Nucleophile in catalysis.

It belongs to the class I-like SAM-binding methyltransferase superfamily. RNA M5U methyltransferase family. RlmD subfamily.

The enzyme catalyses uridine(1939) in 23S rRNA + S-adenosyl-L-methionine = 5-methyluridine(1939) in 23S rRNA + S-adenosyl-L-homocysteine + H(+). Its function is as follows. Catalyzes the formation of 5-methyl-uridine at position 1939 (m5U1939) in 23S rRNA. The chain is 23S rRNA (uracil(1939)-C(5))-methyltransferase RlmD from Hahella chejuensis (strain KCTC 2396).